The primary structure comprises 306 residues: Pantothenate kinase (306 aa).

Gly-91–Ser-98 serves as a coordination point for ATP.

The protein belongs to the prokaryotic pantothenate kinase family.

It is found in the cytoplasm. It catalyses the reaction (R)-pantothenate + ATP = (R)-4'-phosphopantothenate + ADP + H(+). It functions in the pathway cofactor biosynthesis; coenzyme A biosynthesis; CoA from (R)-pantothenate: step 1/5. In Streptococcus suis (strain 05ZYH33), this protein is Pantothenate kinase.